Here is a 291-residue protein sequence, read N- to C-terminus: Diaminopimelate epimerase (291 aa).

Residues Asn11 and Asn78 each coordinate substrate. Cys87 serves as the catalytic Proton donor. Residues 88–89 (GN), Asn166, Asn200, and 218–219 (ER) contribute to the substrate site. Cys227 serves as the catalytic Proton acceptor. A substrate-binding site is contributed by 228 to 229 (GT).

This sequence belongs to the diaminopimelate epimerase family. In terms of assembly, homodimer.

It localises to the cytoplasm. It carries out the reaction (2S,6S)-2,6-diaminopimelate = meso-2,6-diaminopimelate. Its pathway is amino-acid biosynthesis; L-lysine biosynthesis via DAP pathway; DL-2,6-diaminopimelate from LL-2,6-diaminopimelate: step 1/1. Catalyzes the stereoinversion of LL-2,6-diaminopimelate (L,L-DAP) to meso-diaminopimelate (meso-DAP), a precursor of L-lysine and an essential component of the bacterial peptidoglycan. This is Diaminopimelate epimerase from Mycolicibacterium smegmatis (strain ATCC 700084 / mc(2)155) (Mycobacterium smegmatis).